The chain runs to 86 residues: Large ribosomal subunit protein uL23 (86 aa).

It belongs to the universal ribosomal protein uL23 family. As to quaternary structure, part of the 50S ribosomal subunit. Contacts protein L29.

In terms of biological role, binds to 23S rRNA. One of the proteins that surrounds the polypeptide exit tunnel on the outside of the ribosome. This Thermococcus gammatolerans (strain DSM 15229 / JCM 11827 / EJ3) protein is Large ribosomal subunit protein uL23.